Consider the following 256-residue polypeptide: 5'-nucleotidase SurE (256 aa).

Residues Asp9, Asp10, Ser40, and Asn94 each coordinate a divalent metal cation.

The protein belongs to the SurE nucleotidase family. The cofactor is a divalent metal cation.

It localises to the cytoplasm. The enzyme catalyses a ribonucleoside 5'-phosphate + H2O = a ribonucleoside + phosphate. Nucleotidase that shows phosphatase activity on nucleoside 5'-monophosphates. The sequence is that of 5'-nucleotidase SurE from Campylobacter fetus subsp. fetus (strain 82-40).